The primary structure comprises 353 residues: DNA replication and repair protein RecF (353 aa).

30 to 37 provides a ligand contact to ATP; that stretch reads GANGQGKT.

It belongs to the RecF family.

It is found in the cytoplasm. The RecF protein is involved in DNA metabolism; it is required for DNA replication and normal SOS inducibility. RecF binds preferentially to single-stranded, linear DNA. It also seems to bind ATP. This chain is DNA replication and repair protein RecF, found in Carboxydothermus hydrogenoformans (strain ATCC BAA-161 / DSM 6008 / Z-2901).